We begin with the raw amino-acid sequence, 859 residues long: MSNFWDNNKGSIMSGLASAGKYGYQGTKYVAKAGYKASKTHYNNSQGKKNVEESSDEGYMSESASDLSHLQDPKMFPPPPLKPGQKQISSDGTVIDAGNAPLVHTAAVPMANAASHPGLPPRTPTANSIPMLTQQQTYPPQNMYQQQPPPQPPMQQQVPPQVQQIPQPGQQLSQQPMQQLHPEPIPPRNYQTAVETPPQYTPIPSLNAQHVQEQLQQQLQQQFQPSMGTPDQGQALVQGSPLASQQQVQPQVQPQTSQYQSQQVPSPQIQNQGQLMQQQQNYFQPQLQQTQPQQYIDSYAQYQQQGQQQVQPQIQQMQPQVQQQPIQQPPQAQPQYQQSYPPQYQQQTQSLQPQYQQPVQAPIVQPPIPQQDYYQQQQQTPYQPASQPQMYQQQPGQQNPIVSPAPALAQRPSLSNIQTSTGHGASQESTVSSTASITVKPYVWMDSDERKEKKKIELQPVSAIDIHQVTPPLHKDRSSSSSLKSSSRDASVLEKGKSLSPGPAPLPSRNVRPPTSVDHTKPNTVTPAAATGTSAEVGDDQVRPNESITGVYHESTVSFPPPPKPTHNGLPMSPPVSHARPTVSHKPPNPPRPPVSSKPTLPPIQTHQRITSTERAPIGRPKEEVHQAAVLGAYNYNVDVGFAPPPKPPRSMVTSPANDPQTSLSSRRPSQEYGGVAKASSRTLPPPPGQQNGSLPQHTEEEPASNSSESAPPAMRMLPLADLPPPPQRTDSHTTTSEQPAVPSRTFDPPPRYSTNETIPPTYNIDEDIQTAHKKPPPKVPKKKVSLRAGNKPPVPKKKASLSGTATHEHNESARTSLTQETNNSIDDDDDDDSGEGNSFRKYLRHVVPAERDHIHKSK.

5 disordered regions span residues S38–I95, T137–T290, Q320–P358, D372–E624, and V638–K859. Composition is skewed to low complexity over residues T137–Q146, M154–Q179, and Q209–Q224. Residues P225–V237 show a composition bias toward polar residues. Low complexity-rich tracts occupy residues S240–T290, Q333–P358, and D372–P400. The span at P412–I437 shows a compositional bias: polar residues. Positions S447–E457 are enriched in basic and acidic residues. Residues S479–A490 show a composition bias toward low complexity. The span at P522–S534 shows a compositional bias: polar residues. Over residues P587 to P602 the composition is skewed to pro residues. 2 stretches are compositionally biased toward polar residues: residues Q605–E614 and M652–R668. Over residues A704–A714 the composition is skewed to low complexity. A compositionally biased stretch (basic residues) spans A772–S786. Over residues A814–S825 the composition is skewed to polar residues. Over residues I826 to G835 the composition is skewed to acidic residues. Residues V848–K859 are compositionally biased toward basic and acidic residues.

The protein belongs to the AIM3 family.

The protein localises to the membrane raft. In Kluyveromyces lactis (strain ATCC 8585 / CBS 2359 / DSM 70799 / NBRC 1267 / NRRL Y-1140 / WM37) (Yeast), this protein is Altered inheritance of mitochondria protein 3 (AIM3).